Reading from the N-terminus, the 916-residue chain is Translation initiation factor IF-2 (916 aa).

The tract at residues E55–T324 is disordered. Residues A77–A88 show a composition bias toward low complexity. Basic and acidic residues-rich tracts occupy residues F98–N121, R129–N161, and R198–R212. Over residues K227–V250 the composition is skewed to low complexity. Residues A264–K281 are compositionally biased toward basic and acidic residues. Positions K291–N304 are enriched in low complexity. Residues K305 to R314 show a composition bias toward basic residues. The region spanning E418 to E585 is the tr-type G domain. Residues G427–T434 are G1. G427–T434 provides a ligand contact to GTP. Positions G452–H456 are G2. Residues D473–G476 are G3. GTP contacts are provided by residues D473–H477 and N527–D530. A G4 region spans residues N527–D530. Residues S563–K565 are G5.

It belongs to the TRAFAC class translation factor GTPase superfamily. Classic translation factor GTPase family. IF-2 subfamily.

The protein resides in the cytoplasm. Its function is as follows. One of the essential components for the initiation of protein synthesis. Protects formylmethionyl-tRNA from spontaneous hydrolysis and promotes its binding to the 30S ribosomal subunits. Also involved in the hydrolysis of GTP during the formation of the 70S ribosomal complex. The protein is Translation initiation factor IF-2 of Streptococcus mutans serotype c (strain ATCC 700610 / UA159).